The chain runs to 664 residues: E3 ubiquitin-protein ligase RNF139 (664 aa).

N-acetylalanine is present on Ala-2. Helical transmembrane passes span 51–71 (IVLQ…VLIL), 85–105 (AFLL…HIDF), 125–145 (SLWM…VTLL), 154–174 (LIIL…PLHI), 178–198 (LVFT…AVKL), 293–313 (GMSA…LAFI), 323–343 (LGFV…LSGL), 356–376 (MCLL…PVLM), 390–410 (FPVL…SYVL), 420–440 (LFAA…SLTV), 469–489 (SIIV…TMMF), and 495–512 (IRAF…YLQA). The RING-type; atypical zinc-finger motif lies at 547–586 (CAICYHEFTTSARITPCNHYFHALCLRKWLYIQDTCPMCH). Over residues 599–610 (SNVSNNNGFTPP) the composition is skewed to polar residues. A disordered region spans residues 599–664 (SNVSNNNGFT…AAEEFNDDTD (66 aa)). Positions 616–628 (EAVREAAAESDRE) are enriched in basic and acidic residues. Positions 629–639 (LNEDDSTDCDD) are enriched in acidic residues. Ser-634 carries the phosphoserine modification. Phosphothreonine is present on residues Thr-635 and Thr-663.

As to quaternary structure, interacts with VHL. Interacts with MHC class I and HM13. Component of SCAP-SREBP complex composed of SREBF2, SCAP and RNF139; the complex hampers the interaction between SCAP and SEC24B, thereby reducing SREBF2 proteolytic processing. Interacts with SREBF2 (via C-terminal domain). Interacts with SCAP; the interaction inhibits the interaction of SCAP with SEC24B and hampering the ER to Golgi transport of the SCAP-SREBP complex. Interacts with SEC24B. Interacts with INSIG1 and INSIG2. Interacts with EIF3F and EIF3H; the interaction leads to protein translation inhibitions in a ubiquitination-dependent manner. Interacts with XBP1; the interaction induces ubiquitination and degradation of XBP1. Interacts with AUP1, AMFR and UBE2G2; interaction with AUP1 facilitates interaction of RNF139 with ubiquitin-conjugating enzyme UBE2G2 and ubiquitin ligase AMFR/gp78, leading to sterol-induced ubiquitination of HMGCR and its subsequent proteasomal degradation. Autoubiquitinated. Ubiquitination is induced by sterol and leads to ist degradation via the ubiquitin-proteasome pathway.

It is found in the endoplasmic reticulum membrane. The enzyme catalyses S-ubiquitinyl-[E2 ubiquitin-conjugating enzyme]-L-cysteine + [acceptor protein]-L-lysine = [E2 ubiquitin-conjugating enzyme]-L-cysteine + N(6)-ubiquitinyl-[acceptor protein]-L-lysine.. It functions in the pathway protein modification; protein ubiquitination. E3-ubiquitin ligase; acts as a negative regulator of cell proliferation through mechanisms involving G2/M arrest and cell death. Required for MHC class I ubiquitination in cells expressing the cytomegalovirus protein US2 before dislocation from the endoplasmic reticulum (ER). Affects SREBP processing by hindering the SREBP-SCAP complex translocation from the ER to the Golgi, thereby reducing SREBF2 target gene expression. Involved in the sterol-accelerated degradation of HMGCR. This is achieved through binding to INSIG1 and/or INSIG2 at the ER membrane. In addition, interaction of RNF139 with AUP1 facilitates interaction of RNF139 with ubiquitin-conjugating enzyme UBE2G2 and ubiquitin ligase AMFR, leading to ubiquitination of HMGCR. The ubiquitinated HMGCR is then released from the ER by the complex into the cytosol for subsequent destruction. Required for INSIG1 ubiquitination. May be required for EIF3 complex ubiquitination. This is E3 ubiquitin-protein ligase RNF139 (RNF139) from Pongo abelii (Sumatran orangutan).